Reading from the N-terminus, the 271-residue chain is Neurexophilin-1 (271 aa).

An N-terminal signal peptide occupies residues 1–21 (MQAACWYVLFLLQPTVYLVTC). The II stretch occupies residues 22–97 (ANLTNGGKSE…WDWLRNSTDL (76 aa)). Residues Asn-23, Asn-68, Asn-93, Asn-146, Asn-156, and Asn-162 are each glycosylated (N-linked (GlcNAc...) asparagine). An III region spans residues 98 to 176 (QEPRPRAKRR…LVPPTKIVEF (79 aa)). Residues 177–185 (DLAQQTVID) are IV (linker domain). The interval 186 to 271 (AKDSKSFNCR…HSDTPYFPSG (86 aa)) is v (Cys-rich).

This sequence belongs to the neurexophilin family.

The protein resides in the secreted. May be signaling molecules that resemble neuropeptides and that act by binding to alpha-neurexins and possibly other receptors. The protein is Neurexophilin-1 (NXPH1) of Homo sapiens (Human).